The following is a 94-amino-acid chain: Pyrimidine/purine nucleoside phosphorylase (94 aa).

Belongs to the nucleoside phosphorylase PpnP family.

It catalyses the reaction a purine D-ribonucleoside + phosphate = a purine nucleobase + alpha-D-ribose 1-phosphate. The catalysed reaction is adenosine + phosphate = alpha-D-ribose 1-phosphate + adenine. The enzyme catalyses cytidine + phosphate = cytosine + alpha-D-ribose 1-phosphate. It carries out the reaction guanosine + phosphate = alpha-D-ribose 1-phosphate + guanine. It catalyses the reaction inosine + phosphate = alpha-D-ribose 1-phosphate + hypoxanthine. The catalysed reaction is thymidine + phosphate = 2-deoxy-alpha-D-ribose 1-phosphate + thymine. The enzyme catalyses uridine + phosphate = alpha-D-ribose 1-phosphate + uracil. It carries out the reaction xanthosine + phosphate = alpha-D-ribose 1-phosphate + xanthine. Catalyzes the phosphorolysis of diverse nucleosides, yielding D-ribose 1-phosphate and the respective free bases. Can use uridine, adenosine, guanosine, cytidine, thymidine, inosine and xanthosine as substrates. Also catalyzes the reverse reactions. The chain is Pyrimidine/purine nucleoside phosphorylase from Aeromonas salmonicida (strain A449).